The sequence spans 185 residues: TATA-box-binding protein 2 (185 aa).

2 repeat units span residues 7–84 (IENI…ANEL) and 100–178 (VQNV…KTQL).

It belongs to the TBP family.

Its function is as follows. General factor that plays a role in the activation of archaeal genes transcribed by RNA polymerase. Binds specifically to the TATA box promoter element which lies close to the position of transcription initiation. The chain is TATA-box-binding protein 2 from Methanosarcina acetivorans (strain ATCC 35395 / DSM 2834 / JCM 12185 / C2A).